Reading from the N-terminus, the 117-residue chain is uncharacterized protein (117 aa).

A run of 2 helical transmembrane segments spans residues 9-29 and 56-76; these read ITSH…FIPF and VIIV…FFIP.

Its subcellular location is the membrane. This is an uncharacterized protein from Saccharomyces cerevisiae (strain ATCC 204508 / S288c) (Baker's yeast).